The sequence spans 231 residues: Cytochrome c oxidase assembly factor 7A (231 aa).

Sel1-like repeat units lie at residues 34–66, 68–104, 108–145, 146–182, and 183–218; these read PDGC…DQNE, SESF…NKGG, IDSC…DGNF, AASC…SLGH, and VWGC…DLHK.

It belongs to the hcp beta-lactamase family.

The protein resides in the mitochondrion intermembrane space. May be required for assembly of mitochondrial respiratory chain complexes. The protein is Cytochrome c oxidase assembly factor 7A (coa7-a) of Xenopus laevis (African clawed frog).